The chain runs to 485 residues: Hydrogenase transcriptional regulatory protein HoxA (485 aa).

The region spanning 6–120 (TILVVDDEVR…QLVETVKEAV (115 aa)) is the Response regulatory domain. Asp54 is modified (4-aspartylphosphate). Positions 166–392 (STESPMHAVI…ELQNEIQRMA (227 aa)) constitute a Sigma-54 factor interaction domain. Residues 192 to 199 (GESGTGKE) and 264 to 273 (EIGETSPAFQ) each bind ATP. A disordered region spans residues 404 to 426 (PLLGRRNGKRSAPLPAHGRLNGS). A DNA-binding region (H-T-H motif) is located at residues 451–470 (NISRVASELGLSRVGLRNKL).

It localises to the cytoplasm. Functionally, probable member of the two-component regulatory system involved in the regulation of the hydrogenase activity. HoxA is probably phosphorylated by a sensory component (which could be HoxX) and then acts in conjunction with sigma-54 as a transcriptional activator. This chain is Hydrogenase transcriptional regulatory protein HoxA (hoxA), found in Bradyrhizobium diazoefficiens (strain JCM 10833 / BCRC 13528 / IAM 13628 / NBRC 14792 / USDA 110).